The sequence spans 381 residues: L-lactate dehydrogenase (381 aa).

The region spanning 1–380 (MIISASTDYR…TRDSLVRELG (380 aa)) is the FMN hydroxy acid dehydrogenase domain. Position 24 (Tyr24) interacts with substrate. The FMN site is built by Ser106 and Gln127. Position 129 (Tyr129) interacts with substrate. Residue Thr155 coordinates FMN. Arg164 is a binding site for substrate. FMN is bound at residue Lys251. Residue His275 is the Proton acceptor of the active site. Arg278 is a substrate binding site. 306 to 330 (DSGIRSGLDVVRMIALGADTVLIGR) contacts FMN.

The protein belongs to the FMN-dependent alpha-hydroxy acid dehydrogenase family. As to quaternary structure, homotetramer. The cofactor is FMN.

The protein resides in the cell inner membrane. The catalysed reaction is (S)-lactate + A = pyruvate + AH2. Functionally, catalyzes the conversion of L-lactate to pyruvate. Is coupled to the respiratory chain. The sequence is that of L-lactate dehydrogenase from Pseudomonas putida (strain GB-1).